The sequence spans 676 residues: RNA helicase NPH-II (676 aa).

The region spanning 172–347 is the Helicase ATP-binding domain; sequence FSAWISHRPV…VFLPNPAFIH (176 aa). 185–192 is a binding site for ATP; the sequence is GGTGVGKT. A DEXH box motif is present at residues 296–299; that stretch reads DEVH. The region spanning 366 to 535 is the Helicase C-terminal domain; the sequence is NPSSRMAYIE…NYILYANKFN (170 aa).

It belongs to the DEAD box helicase family. DEAH subfamily. As to quaternary structure, monomer.

The protein localises to the virion. It catalyses the reaction ATP + H2O = ADP + phosphate + H(+). In terms of biological role, NTP-dependent helicase that catalyzes unidirectional unwinding of 3'tailed duplex RNAs and plays an important role during transcription of early mRNAs, presumably by preventing R-loop formation behind the elongating RNA polymerase. Might also play a role in the export of newly synthesized mRNA chains out of the core into the cytoplasm. Required for replication and propagation of viral particles. This is RNA helicase NPH-II (OPG084) from Bos taurus (Bovine).